A 145-amino-acid chain; its full sequence is Nicking endonuclease (145 aa).

A disordered region spans residues 126–145 (NPQEKTQVKTETKSGFARFL).

In terms of biological role, endonuclease responsible for the single-chain interruptions (nicks) located at specific positions in the minus strand of the viral genome. This chain is Nicking endonuclease, found in Escherichia phage T5 (Enterobacteria phage T5).